A 106-amino-acid polypeptide reads, in one-letter code: Large ribosomal subunit protein uL24 (106 aa).

The protein belongs to the universal ribosomal protein uL24 family. As to quaternary structure, part of the 50S ribosomal subunit.

Functionally, one of two assembly initiator proteins, it binds directly to the 5'-end of the 23S rRNA, where it nucleates assembly of the 50S subunit. Its function is as follows. One of the proteins that surrounds the polypeptide exit tunnel on the outside of the subunit. The polypeptide is Large ribosomal subunit protein uL24 (Paracidovorax citrulli (strain AAC00-1) (Acidovorax citrulli)).